Here is a 131-residue protein sequence, read N- to C-terminus: MRHYEIVFIVHPDQSEQVPAMIERYRTLVTSNGGTIHRLEDWGRRQLAYPIQKIHKAHYVLMNIEVSQEVLNELEHAFKFNDAVLRHLTLNTDEAVTAPSPMMKEEKSKSLLAKDEAAAPAPAPATEQATA.

The segment at 96-131 (VTAPSPMMKEEKSKSLLAKDEAAAPAPAPATEQATA) is disordered. A compositionally biased stretch (basic and acidic residues) spans 103 to 117 (MKEEKSKSLLAKDEA). The segment covering 118-131 (AAPAPAPATEQATA) has biased composition (low complexity).

This sequence belongs to the bacterial ribosomal protein bS6 family.

Binds together with bS18 to 16S ribosomal RNA. This Methylobacillus flagellatus (strain ATCC 51484 / DSM 6875 / VKM B-1610 / KT) protein is Small ribosomal subunit protein bS6.